Here is a 318-residue protein sequence, read N- to C-terminus: Ankyrin repeat and SOCS box protein 7 (318 aa).

7 ANK repeats span residues 13-42 (QEESQIQAAVAAGDVHTVRKMLEQGYSPNG), 46-75 (NGWTLLHFSAARGKERCVRVFLEHGADPTV), 80-109 (GGFTALHYAAMHGRARIARLMLESEYRSDI), 116-145 (DGWTPLHVAAHYGRDSFVRLLLEFKAEVDP), 149-178 (KGTTPLQLAIIRERSSCVKILLDHNANIDI), 180-208 (NGFLLRYAVIKSNHSYCRMFLQRGADTNL), and 213-242 (DGQTPLHLSALRDDVLCARMLYNYGADTNT). In terms of domain architecture, SOCS box spans 265–318 (LDFLQEVTRQPRNLQDLCRIKIRQCIGLQNLKLLDELPIAKVMKDYLKHKSDDI).

This sequence belongs to the ankyrin SOCS box (ASB) family. Interacts with CUL5. Interacts with RNF7. Interacts with PSRC1.

It participates in protein modification; protein ubiquitination. In terms of biological role, probable substrate-recognition component of a SCF-like ECS (Elongin-Cullin-SOCS-box protein) E3 ubiquitin-protein ligase complex which mediates the ubiquitination and subsequent proteasomal degradation of target proteins. Plays a role in spindle dynamics and genome integrity by targeting the mitotic progression protein PSRC1 for proteasomal degradation in a cell cycle-dependent manner. Also participates in meiosis by mediating the proper attachment between kinetochores and microtubules. The protein is Ankyrin repeat and SOCS box protein 7 (ASB7) of Pongo abelii (Sumatran orangutan).